We begin with the raw amino-acid sequence, 207 residues long: Porin MspD (207 aa).

A signal peptide spans 1-24 (MRYLVMMFALLVSVTLVSPRPANA).

It belongs to the mycobacterial porin (TC 1.B.24) family. As to quaternary structure, octamers. Probably forms a goblet with the wide end on the exterior of the outer membrane and a central channel. It is not known if mixed oligomers of MspD with other Msp subunits form in vivo.

Its subcellular location is the cell outer membrane. The protein resides in the secreted. It is found in the cell wall. Its function is as follows. A backup porin induced when MspA, the major porin, is deleted. It probably forms a water-filled channel which favors the permeation of cations. There are about 2400 porins in wild-type, 800 in an mspA deletion and 150 in a double mspA-mspC deletion. In Mycolicibacterium smegmatis (strain ATCC 700084 / mc(2)155) (Mycobacterium smegmatis), this protein is Porin MspD (mspD).